The sequence spans 638 residues: 2-isopropylmalate synthase (638 aa).

The Pyruvate carboxyltransferase domain maps to 72 to 346; that stretch reads PRWCSVDLRD…DPQLDLSNVP (275 aa). Residues Asp81, His285, His287, and Asn321 each coordinate Mg(2+). The regulatory domain stretch occupies residues 488–638; the sequence is VEQSGMTAAG…SAINRSQRQR (151 aa).

Belongs to the alpha-IPM synthase/homocitrate synthase family. LeuA type 2 subfamily. Homodimer. Requires Mg(2+) as cofactor.

The protein localises to the cytoplasm. It carries out the reaction 3-methyl-2-oxobutanoate + acetyl-CoA + H2O = (2S)-2-isopropylmalate + CoA + H(+). The protein operates within amino-acid biosynthesis; L-leucine biosynthesis; L-leucine from 3-methyl-2-oxobutanoate: step 1/4. Catalyzes the condensation of the acetyl group of acetyl-CoA with 3-methyl-2-oxobutanoate (2-ketoisovalerate) to form 3-carboxy-3-hydroxy-4-methylpentanoate (2-isopropylmalate). This Bifidobacterium longum subsp. infantis (strain ATCC 15697 / DSM 20088 / JCM 1222 / NCTC 11817 / S12) protein is 2-isopropylmalate synthase.